A 121-amino-acid chain; its full sequence is uncharacterized protein (121 aa).

In terms of domain architecture, HTH gntR-type spans 9–77; sequence KPIYLQIADQ…RGQGTFIAEK (69 aa). Residues 37–56 constitute a DNA-binding region (H-T-H motif); the sequence is VREMAIQTKVNPNTIQRTYS.

This is an uncharacterized protein from Bacillus subtilis (strain 168).